Reading from the N-terminus, the 171-residue chain is Shikimate kinase (171 aa).

Position 14-19 (glycine 14–threonine 19) interacts with ATP. Serine 18 contributes to the Mg(2+) binding site. 3 residues coordinate substrate: aspartate 36, arginine 60, and glycine 82. Residue arginine 120 participates in ATP binding. Arginine 139 lines the substrate pocket. Glutamine 156 is an ATP binding site.

It belongs to the shikimate kinase family. Monomer. The cofactor is Mg(2+).

Its subcellular location is the cytoplasm. It catalyses the reaction shikimate + ATP = 3-phosphoshikimate + ADP + H(+). Its pathway is metabolic intermediate biosynthesis; chorismate biosynthesis; chorismate from D-erythrose 4-phosphate and phosphoenolpyruvate: step 5/7. In terms of biological role, catalyzes the specific phosphorylation of the 3-hydroxyl group of shikimic acid using ATP as a cosubstrate. This chain is Shikimate kinase, found in Shewanella putrefaciens (strain CN-32 / ATCC BAA-453).